The chain runs to 117 residues: Putative pterin-4-alpha-carbinolamine dehydratase (117 aa).

Belongs to the pterin-4-alpha-carbinolamine dehydratase family.

The enzyme catalyses (4aS,6R)-4a-hydroxy-L-erythro-5,6,7,8-tetrahydrobiopterin = (6R)-L-erythro-6,7-dihydrobiopterin + H2O. This is Putative pterin-4-alpha-carbinolamine dehydratase from Aeromonas salmonicida (strain A449).